Here is a 206-residue protein sequence, read N- to C-terminus: Small ribosomal subunit protein uS4 (206 aa).

A disordered region spans residues asparagine 18–serine 46. An S4 RNA-binding domain is found at arginine 94–isoleucine 154.

It belongs to the universal ribosomal protein uS4 family. In terms of assembly, part of the 30S ribosomal subunit. Contacts protein S5. The interaction surface between S4 and S5 is involved in control of translational fidelity.

Functionally, one of the primary rRNA binding proteins, it binds directly to 16S rRNA where it nucleates assembly of the body of the 30S subunit. In terms of biological role, with S5 and S12 plays an important role in translational accuracy. This Roseobacter denitrificans (strain ATCC 33942 / OCh 114) (Erythrobacter sp. (strain OCh 114)) protein is Small ribosomal subunit protein uS4.